The chain runs to 536 residues: Heparanase (536 aa).

A signal peptide spans methionine 1–threonine 28. Residues aspartate 55–serine 57 and threonine 90 contribute to the heparan sulfate group site. Residues proline 103–glutamine 150 constitute a propeptide, linker peptide. Cysteine 120 and cysteine 172 are disulfide-bonded. Residue arginine 151–asparagine 155 coordinates heparan sulfate group. N-linked (GlcNAc...) asparagine glycosylation is found at asparagine 155, asparagine 193, and asparagine 210. Glutamate 218 serves as the catalytic Proton donor. Residues glutamine 263–arginine 273, histidine 289, and arginine 296 each bind heparan sulfate group. Residues glutamate 281 to lysine 410 are required for heterodimerization with the heparanase 8 kDa subunit. The active-site Nucleophile is the glutamate 336. Heparan sulfate group is bound by residues tyrosine 341–glycine 343 and glycine 382–tyrosine 384. Cysteine 430 and cysteine 535 are disulfide-bonded. Asparagine 452 carries an N-linked (GlcNAc...) asparagine glycan. The tract at residues phenylalanine 520–isoleucine 536 is required for transferring proheparanase to the Golgi apparatus, secretion and subsequent enzyme activity and for enhancement of PKB/AKT1 phosphorylation.

Belongs to the glycosyl hydrolase 79 family. As to quaternary structure, heterodimer; heterodimer formation between the 8 kDa and the 50 kDa subunits is required for enzyme activity. Interacts with TF; the interaction, inhibited by heparin, enhances the generation of activated factor X and activates coagulation. Interacts with HRG; the interaction is enhanced at acidic pH, partially inhibits binding of HPSE to cell surface receptors and modulates its enzymatic activity. Interacts with SDC1; the interaction enhances the shedding of SDC1. Interacts with HPSE2. Post-translationally, proteolytically processed. The cleavage of the 65 kDa form leads to the generation of a linker peptide, and the 8 kDa and 50 kDa products. The active form, the 8/50 kDa heterodimer, is resistant to degradation. Complete removal of the linker peptide appears to be a prerequisite to the complete activation of the enzyme. In terms of processing, N-glycosylated. Glycosylation of the 50 kDa subunit appears to be essential for its solubility.

It localises to the lysosome membrane. Its subcellular location is the secreted. The protein localises to the nucleus. It carries out the reaction endohydrolysis of (1-&gt;4)-beta-D-glycosidic bonds of heparan sulfate chains in heparan sulfate proteoglycan.. Its activity is regulated as follows. Inhibited by laminarin sulfate and, to a lower extent, by heparin and sulfamin. Activated by calcium and magnesium. Inhibited by EDTA. Its function is as follows. Endoglycosidase that cleaves heparan sulfate proteoglycans (HSPGs) into heparan sulfate side chains and core proteoglycans. Participates in extracellular matrix (ECM) degradation and remodeling. Selectively cleaves the linkage between a glucuronic acid unit and an N-sulfo glucosamine unit carrying either a 3-O-sulfo or a 6-O-sulfo group. Can also cleave the linkage between a glucuronic acid unit and an N-sulfo glucosamine unit carrying a 2-O-sulfo group, but not linkages between a glucuronic acid unit and a 2-O-sulfated iduronic acid moiety. It is essentially inactive at neutral pH but becomes active under acidic conditions such as during tumor invasion and in inflammatory processes. Facilitates cell migration associated with metastasis, wound healing and inflammation. Enhances shedding of syndecans, and increases endothelial invasion and angiogenesis in myelomas. Acts as a procoagulant by increasing the generation of activation factor X in the presence of tissue factor and activation factor VII. Increases cell adhesion to the extracellular matrix (ECM), independent of its enzymatic activity. Induces AKT1/PKB phosphorylation via lipid rafts increasing cell mobility and invasion. Heparin increases this AKT1/PKB activation. Regulates osteogenesis. Enhances angiogenesis through up-regulation of SRC-mediated activation of VEGF. Implicated in hair follicle inner root sheath differentiation and hair homeostasis. This Rattus norvegicus (Rat) protein is Heparanase (Hpse).